Consider the following 726-residue polypeptide: Catalase-peroxidase (726 aa).

Residues methionine 1–threonine 33 form a disordered region. Positions tryptophan 105 to tyrosine 226 form a cross-link, tryptophyl-tyrosyl-methioninium (Trp-Tyr) (with M-252). Histidine 106 functions as the Proton acceptor in the catalytic mechanism. Positions tyrosine 226–methionine 252 form a cross-link, tryptophyl-tyrosyl-methioninium (Tyr-Met) (with W-105). Position 267 (histidine 267) interacts with heme b.

Belongs to the peroxidase family. Peroxidase/catalase subfamily. As to quaternary structure, homodimer or homotetramer. Heme b is required as a cofactor. Formation of the three residue Trp-Tyr-Met cross-link is important for the catalase, but not the peroxidase activity of the enzyme.

The catalysed reaction is H2O2 + AH2 = A + 2 H2O. The enzyme catalyses 2 H2O2 = O2 + 2 H2O. Its function is as follows. Bifunctional enzyme with both catalase and broad-spectrum peroxidase activity. This is Catalase-peroxidase from Shigella boydii serotype 18 (strain CDC 3083-94 / BS512).